Reading from the N-terminus, the 101-residue chain is NAD(P)H-quinone oxidoreductase subunit 4L, chloroplastic (101 aa).

A run of 3 helical transmembrane segments spans residues 2-22 (MLEH…YGLI), 32-52 (MCLE…SDFF), and 61-81 (IFSI…LAIV).

Belongs to the complex I subunit 4L family. As to quaternary structure, NDH is composed of at least 16 different subunits, 5 of which are encoded in the nucleus.

The protein localises to the plastid. Its subcellular location is the chloroplast thylakoid membrane. The catalysed reaction is a plastoquinone + NADH + (n+1) H(+)(in) = a plastoquinol + NAD(+) + n H(+)(out). The enzyme catalyses a plastoquinone + NADPH + (n+1) H(+)(in) = a plastoquinol + NADP(+) + n H(+)(out). NDH shuttles electrons from NAD(P)H:plastoquinone, via FMN and iron-sulfur (Fe-S) centers, to quinones in the photosynthetic chain and possibly in a chloroplast respiratory chain. The immediate electron acceptor for the enzyme in this species is believed to be plastoquinone. Couples the redox reaction to proton translocation, and thus conserves the redox energy in a proton gradient. This chain is NAD(P)H-quinone oxidoreductase subunit 4L, chloroplastic, found in Daucus carota (Wild carrot).